Here is a 458-residue protein sequence, read N- to C-terminus: MSNRALSVVVLAAGKGSRMFSTLPKVLHPLAGKAMVQHVIDTAMRLGASRIHLVYGHGGELLRERLARQYAPLNWVLQAEQRGTGHAVQQTLTCLRDEEDVLILYGDVPLISPDTLQCLLAARPQGGIGLLTVTLDNPEGYGRIVRLNGEVAGIVEQKDASEQQRQIKEINTGILVAGGEDIKRWLGQLTNKNAQGEFYLTDIIAMAWHEGRKINAVQPTRQTEVEGVNNRLQLARLERLFQREQAERLLLAGVMLSDPDRFDLRGEFRHGQDVSIDTNVILEGQVTLGDRVIIGTGCVLKNVVIGDDVIISPYTVIEDARVAARSTLGPFARLRPGSELEEDAHVGNFVEMKQARLGKGSKAGHLSYLGDAEIGAQVNIGAGTITCNYDGANKHKTHIGDDVFVGSDSQLVAPVTIGRGATIGAGTTVTRDVAEGEMIISRIRQFPLANWTRPVKKK.

The pyrophosphorylase stretch occupies residues 1–231; sequence MSNRALSVVV…QTEVEGVNNR (231 aa). Residues 11–14, K25, Q78, 83–84, 105–107, G142, E156, N171, and N229 each bind UDP-N-acetyl-alpha-D-glucosamine; these read LAAG, GT, and YGD. A Mg(2+)-binding site is contributed by D107. Residue N229 coordinates Mg(2+). The linker stretch occupies residues 232-252; that stretch reads LQLARLERLFQREQAERLLLA. Residues 253–458 form an N-acetyltransferase region; it reads GVMLSDPDRF…ANWTRPVKKK (206 aa). UDP-N-acetyl-alpha-D-glucosamine is bound by residues R335 and K353. H365 serves as the catalytic Proton acceptor. Y368 and N379 together coordinate UDP-N-acetyl-alpha-D-glucosamine. Acetyl-CoA-binding positions include A382, 388 to 389, S407, A425, and R442; that span reads NY.

In the N-terminal section; belongs to the N-acetylglucosamine-1-phosphate uridyltransferase family. It in the C-terminal section; belongs to the transferase hexapeptide repeat family. As to quaternary structure, homotrimer. Mg(2+) is required as a cofactor.

The protein localises to the cytoplasm. It carries out the reaction alpha-D-glucosamine 1-phosphate + acetyl-CoA = N-acetyl-alpha-D-glucosamine 1-phosphate + CoA + H(+). The catalysed reaction is N-acetyl-alpha-D-glucosamine 1-phosphate + UTP + H(+) = UDP-N-acetyl-alpha-D-glucosamine + diphosphate. It functions in the pathway nucleotide-sugar biosynthesis; UDP-N-acetyl-alpha-D-glucosamine biosynthesis; N-acetyl-alpha-D-glucosamine 1-phosphate from alpha-D-glucosamine 6-phosphate (route II): step 2/2. The protein operates within nucleotide-sugar biosynthesis; UDP-N-acetyl-alpha-D-glucosamine biosynthesis; UDP-N-acetyl-alpha-D-glucosamine from N-acetyl-alpha-D-glucosamine 1-phosphate: step 1/1. Its pathway is bacterial outer membrane biogenesis; LPS lipid A biosynthesis. Catalyzes the last two sequential reactions in the de novo biosynthetic pathway for UDP-N-acetylglucosamine (UDP-GlcNAc). The C-terminal domain catalyzes the transfer of acetyl group from acetyl coenzyme A to glucosamine-1-phosphate (GlcN-1-P) to produce N-acetylglucosamine-1-phosphate (GlcNAc-1-P), which is converted into UDP-GlcNAc by the transfer of uridine 5-monophosphate (from uridine 5-triphosphate), a reaction catalyzed by the N-terminal domain. The protein is Bifunctional protein GlmU of Sodalis glossinidius (strain morsitans).